A 369-amino-acid chain; its full sequence is Glutamate 5-kinase (369 aa).

An ATP-binding site is contributed by Lys9. Substrate-binding residues include Ser49, Asp136, and Asn148. Residues 168–169 and 210–216 contribute to the ATP site; these read TD and TGGMLTK. The PUA domain occupies 275 to 355; it reads QGEIYVDQGA…KGVVIHRDDW (81 aa).

This sequence belongs to the glutamate 5-kinase family.

Its subcellular location is the cytoplasm. It catalyses the reaction L-glutamate + ATP = L-glutamyl 5-phosphate + ADP. It functions in the pathway amino-acid biosynthesis; L-proline biosynthesis; L-glutamate 5-semialdehyde from L-glutamate: step 1/2. Catalyzes the transfer of a phosphate group to glutamate to form L-glutamate 5-phosphate. This chain is Glutamate 5-kinase, found in Streptococcus gordonii (strain Challis / ATCC 35105 / BCRC 15272 / CH1 / DL1 / V288).